The primary structure comprises 327 residues: MPHLAELVAQAKAAIEEAQDVAALDSVRVEYLGKKGHLTLQMSTLRDLPAEERPAAGAVINQAKQEVQQALNARKEQMESALLNERLAAEKIDVSLPGRRIENGGLHPVTRTIERIETFFGELGFSVESGPEIEDDYHNFDALNIPAHHPARADHDTFWFDAKRLLRTQTSGVQIRTMQNKQPPIRIIAPGRVYRNDYDQTHTPMFHQVEGLIVDKDISFTNLKGTLHDFLKNFFEEDMEIRFRPSYFPFTEPSAEVDVMGKNGKWLEVLGCGMVHPNVLRNVGIDPEVYSGFAFGMGMERLTMLRYGVTDLRSFFENDLRFLKQFK.

Position 252 (glutamate 252) interacts with Mg(2+).

This sequence belongs to the class-II aminoacyl-tRNA synthetase family. Phe-tRNA synthetase alpha subunit type 1 subfamily. Tetramer of two alpha and two beta subunits. Requires Mg(2+) as cofactor.

The protein localises to the cytoplasm. It carries out the reaction tRNA(Phe) + L-phenylalanine + ATP = L-phenylalanyl-tRNA(Phe) + AMP + diphosphate + H(+). In Proteus mirabilis (strain HI4320), this protein is Phenylalanine--tRNA ligase alpha subunit.